The primary structure comprises 188 residues: dCTP deaminase (188 aa).

Residues 111 to 116, 135 to 137, Q156, Y170, and Q180 each bind dCTP; these read KSTYAR and TLE. E137 acts as the Proton donor/acceptor in catalysis.

Belongs to the dCTP deaminase family. In terms of assembly, homotrimer.

The enzyme catalyses dCTP + H2O + H(+) = dUTP + NH4(+). It participates in pyrimidine metabolism; dUMP biosynthesis; dUMP from dCTP (dUTP route): step 1/2. Its function is as follows. Catalyzes the deamination of dCTP to dUTP. The chain is dCTP deaminase from Acidovorax sp. (strain JS42).